The primary structure comprises 467 residues: MLAVGCALLTALLAAPGMALAPRGCSKLEVAQDVLTSLPGASVTLTCPGGEPGDNATIHWVLRNQVTGSPDGRPAGVGRRLLLKSVQLSDSGNYSCYQDGVPAGSVRLLVDAPPEEPQLSCFRKSPLSNVGCEWRPRSPPSPTTKAVLLVRKFQNSPVEDFQEPCQYSLEAQRFFCQLAVPEGDNSFHIVTLCVANSAGSQSSTPQTFEGYGILQPDPPVNITVSAVDRNPRWLSVTWQDPPSWNSYFYRLQFELRYRAERSKTFTTWMVKELQHHCIIHDAWSGMRHVVQLRAQEEFGHGLWSEWSQEVTGIPWTESRSSPAETELPLSTQAPTTNEDDEDISSKESANATSLPVQDSASVPLPTFLVAGGSLAFGTLLCIGIILRFKKTGQLQALKEGKTNMHPPYSLGQLVPERPKSTPVLVPLISPPVSPNSLGDNTSRNSRPEARGPQSPYDVSNRDYFFPR.

A signal peptide spans 1-19 (MLAVGCALLTALLAAPGMA). One can recognise an Ig-like C2-type domain in the interval 20-112 (LAPRGCSKLE…AGSVRLLVDA (93 aa)). At 20 to 365 (LAPRGCSKLE…VQDSASVPLP (346 aa)) the chain is on the extracellular side. 4 disulfide bridges follow: Cys-25-Cys-193, Cys-47-Cys-96, Cys-121-Cys-132, and Cys-165-Cys-176. N-linked (GlcNAc...) asparagine glycans are attached at residues Asn-55 and Asn-93. 2 consecutive Fibronectin type-III domains span residues 113–217 (PPEE…LQPD) and 218–316 (PPVN…IPWT). Residues Asn-221 and Asn-245 are each glycosylated (N-linked (GlcNAc...) asparagine). Residues 303–307 (WSEWS) carry the WSXWS motif motif. Residues 315 to 357 (WTESRSSPAETELPLSTQAPTTNEDDEDISSKESANATSLPVQ) form a disordered region. 2 stretches are compositionally biased toward polar residues: residues 317–336 (ESRS…APTT) and 346–357 (KESANATSLPVQ). Residue Asn-350 is glycosylated (N-linked (GlcNAc...) asparagine). O-linked (GlcNAc) threonine glycosylation is present at Thr-352. A helical membrane pass occupies residues 366–386 (TFLVAGGSLAFGTLLCIGIIL). At 387 to 467 (RFKKTGQLQA…VSNRDYFFPR (81 aa)) the chain is on the cytoplasmic side. A disordered region spans residues 428–467 (ISPPVSPNSLGDNTSRNSRPEARGPQSPYDVSNRDYFFPR).

Belongs to the type I cytokine receptor family. Type 3 subfamily. Component of a hexamer of two molecules each of IL6, IL6R and IL6ST; first binds to IL6 to associate with the signaling subunit IL6ST. Interacts (via N-terminal ectodomain) with SORL1; this interaction may affect IL6-binding to IL6R, hence decrease IL6 'classic-signaling'. As to quaternary structure, also interacts with SORL1; this interaction leads to soluble IL6R internalization. May form a trimeric complex with the soluble SORL1 ectodomain and circulating IL6 receptor; this interaction might stabilize circulating IL6, hence promote IL6 'trans-signaling'. Post-translationally, a short soluble form is also released from the membrane by proteolysis. The sIL6R is formed by limited proteolysis of membrane-bound receptors, a process referred to as ectodomain shedding. mIL6R is cleaved by the proteases ADAM10 and ADAM17. In terms of processing, glycosylated. Glycosylation is dispensable for transport, signaling, and cell-surface turnover. Glycosylation at Asn-55 is a protease-regulatory exosite. Glycosylation is required for ADAM17-mediated proteolysis. As to expression, expressed in liver.

The protein resides in the cell membrane. It is found in the secreted. Its activity is regulated as follows. Classic and trans-signaling are both inhibited by tocilizumab, a humanized monoclonal antibody that blocks interleukin IL6R signaling. In terms of biological role, part of the receptor for interleukin 6. Binds to IL6 with low affinity, but does not transduce a signal. Signal activation necessitate an association with IL6ST. Activation leads to the regulation of the immune response, acute-phase reactions and hematopoiesis. The interaction with membrane-bound IL6R and IL6ST stimulates 'classic signaling', the restricted expression of the IL6R limits classic IL6 signaling to only a few tissues such as the liver and some cells of the immune system. Whereas the binding of IL6 and soluble IL6R to IL6ST stimulates 'trans-signaling'. Alternatively, 'cluster signaling' occurs when membrane-bound IL6:IL6R complexes on transmitter cells activate IL6ST receptors on neighboring receiver cells. Signaling via the membrane-bound IL6R is mostly regenerative and anti-inflammatory. Drives naive CD4(+) T cells to the Th17 lineage, through 'cluster signaling' by dendritic cells. Its function is as follows. Soluble form of IL6 receptor (sIL6R) that acts as an agonist of IL6 activity. The IL6:sIL6R complex (hyper-IL6) binds to IL6ST/gp130 on cell surfaces and induces signaling also on cells that do not express membrane-bound IL6R in a process called IL6 'trans-signaling'. sIL6R is causative for the pro-inflammatory properties of IL6 and an important player in the development of chronic inflammatory diseases. In complex with IL6, is required for induction of VEGF production. Plays a protective role during liver injury, being required for maintenance of tissue regeneration. 'Trans-signaling' in central nervous system regulates energy and glucose homeostasis. This chain is Interleukin-6 receptor subunit alpha (IL6R), found in Sus scrofa (Pig).